We begin with the raw amino-acid sequence, 375 residues long: Serpin B5 (375 aa).

N-linked (GlcNAc...) asparagine glycans are attached at residues Asn133, Asn298, and Asn361.

It belongs to the serpin family. Ov-serpin subfamily. In terms of assembly, interacts with IRF6.

The protein resides in the secreted. The protein localises to the extracellular space. Its function is as follows. Tumor suppressor. It blocks the growth, invasion, and metastatic properties of mammary tumors. As it does not undergo the S (stressed) to R (relaxed) conformational transition characteristic of active serpins, it exhibits no serine protease inhibitory activity. The sequence is that of Serpin B5 (Serpinb5) from Mus musculus (Mouse).